The sequence spans 105 residues: Protein LITTLE ZIPPER 2 (105 aa).

The disordered stretch occupies residues 1-20; sequence MCLTTSEPPFPDTDTPTMRS. Positions 39–60 form a coiled coil; sequence NLTRRRRLLKEQKEMEMRNLKL.

Interacts with REV.

Functionally, competitive inhibitor of the HD-ZIPIII transcription factors in shoot apical meristem (SAM) development. Acts by forming non-functional heterodimers. Part of a negative feedback loop. Essential for proper functioning of stem cells in the SAM. The polypeptide is Protein LITTLE ZIPPER 2 (Arabidopsis thaliana (Mouse-ear cress)).